Here is a 238-residue protein sequence, read N- to C-terminus: CBS domain-containing protein CBSX2, chloroplastic (238 aa).

The N-terminal 71 residues, 1–71 (MGSISLSNSM…ASVNNNNSVP (71 aa)), are a transit peptide targeting the chloroplast. CBS domains follow at residues 83–145 (MTPR…QNDT) and 177–234 (MTPS…KRET).

Its subcellular location is the plastid. The protein resides in the chloroplast stroma. The sequence is that of CBS domain-containing protein CBSX2, chloroplastic (CBSX2) from Arabidopsis thaliana (Mouse-ear cress).